The primary structure comprises 258 residues: MMSKDKNRTNDVLIEAGLLSLVLTGTTLATYRGYTRYLRQIRNARGIPSKVFRKRWLYGKVTAVGDGDNFHFFHMPGGLFGGWGWLRSTPQLEKIDIVKKSRNSKRLLDFFRSSNKYVDLPVQYKNKRRLPTISVRICGVDAPERSHFGNPAQPYSEEALIWLQHEILGKKLWIKPLNIDQYGRCVASIRYWTRFGYKDLSLQMLKEGLALVYEGKSNAEFGGREKIYRRHEFIAKSKRIGMWSQKKLETPGDYKRKL.

The chain crosses the membrane as a helical span at residues 12-34; that stretch reads VLIEAGLLSLVLTGTTLATYRGY. The region spanning 55–245 is the TNase-like domain; that stretch reads RWLYGKVTAV…KSKRIGMWSQ (191 aa). Arg-136 is a catalytic residue. Asp-141 lines the Ca(2+) pocket. Catalysis depends on residues Glu-144 and Arg-184.

This sequence belongs to the LCL3 family.

Its subcellular location is the mitochondrion. It localises to the membrane. This chain is Probable endonuclease LCL3 (LCL3), found in Nakaseomyces delphensis (Yeast).